A 161-amino-acid polypeptide reads, in one-letter code: Phosphopantetheine adenylyltransferase (161 aa).

S11 lines the substrate pocket. Residues 11–12 and H19 contribute to the ATP site; that span reads SF. Residues K43, L75, and R89 each coordinate substrate. Residues 90 to 92, E100, and 125 to 131 each bind ATP; these read GLR and YSYLSSS.

It belongs to the bacterial CoaD family. In terms of assembly, homohexamer. Requires Mg(2+) as cofactor.

It is found in the cytoplasm. The enzyme catalyses (R)-4'-phosphopantetheine + ATP + H(+) = 3'-dephospho-CoA + diphosphate. It participates in cofactor biosynthesis; coenzyme A biosynthesis; CoA from (R)-pantothenate: step 4/5. Reversibly transfers an adenylyl group from ATP to 4'-phosphopantetheine, yielding dephospho-CoA (dPCoA) and pyrophosphate. The chain is Phosphopantetheine adenylyltransferase from Citrifermentans bemidjiense (strain ATCC BAA-1014 / DSM 16622 / JCM 12645 / Bem) (Geobacter bemidjiensis).